Reading from the N-terminus, the 67-residue chain is uncharacterized protein (67 aa).

2 helical membrane passes run 13-32 (IACLRSLSIKILIICHGFIV) and 42-64 (RLTNFFSIMILLTFSNFSRTLGL).

It is found in the membrane. This is an uncharacterized protein from Saccharomyces cerevisiae (strain ATCC 204508 / S288c) (Baker's yeast).